The chain runs to 629 residues: Hemocyanin G chain (629 aa).

Cu cation-binding residues include His-171, His-175, His-202, His-322, His-326, and His-362. Asn-447 and Asn-506 each carry an N-linked (GlcNAc...) asparagine glycan. A disulfide bond links Cys-534 and Cys-582. A glycan (N-linked (GlcNAc...) asparagine) is linked at Asn-615.

The protein belongs to the tyrosinase family. Hemocyanin subfamily. Tarantula hemocyanin is a 24-chain polymer with seven different chains identified. Hemolymph.

The protein localises to the secreted. It localises to the extracellular space. Functionally, hemocyanins are copper-containing oxygen carriers occurring freely dissolved in the hemolymph of many mollusks and arthropods. In Aphonopelma sp. (American tarantula), this protein is Hemocyanin G chain (HCG).